The following is a 217-amino-acid chain: ATP phosphoribosyltransferase (217 aa).

Belongs to the ATP phosphoribosyltransferase family. Short subfamily. Heteromultimer composed of HisG and HisZ subunits.

It is found in the cytoplasm. The catalysed reaction is 1-(5-phospho-beta-D-ribosyl)-ATP + diphosphate = 5-phospho-alpha-D-ribose 1-diphosphate + ATP. The protein operates within amino-acid biosynthesis; L-histidine biosynthesis; L-histidine from 5-phospho-alpha-D-ribose 1-diphosphate: step 1/9. Functionally, catalyzes the condensation of ATP and 5-phosphoribose 1-diphosphate to form N'-(5'-phosphoribosyl)-ATP (PR-ATP). Has a crucial role in the pathway because the rate of histidine biosynthesis seems to be controlled primarily by regulation of HisG enzymatic activity. This Syntrophomonas wolfei subsp. wolfei (strain DSM 2245B / Goettingen) protein is ATP phosphoribosyltransferase.